A 1802-amino-acid polypeptide reads, in one-letter code: Protein TIC 214 (1802 aa).

6 helical membrane passes run 19–39 (IINS…FSIG), 68–88 (FIAG…HLAL), 91–111 (PHTI…WNNH), 133–153 (VFLN…SSML), 176–196 (VGWL…LVWI), and 227–247 (IFSI…PSPI).

This sequence belongs to the TIC214 family. As to quaternary structure, part of the Tic complex.

It localises to the plastid. It is found in the chloroplast inner membrane. In terms of biological role, involved in protein precursor import into chloroplasts. May be part of an intermediate translocation complex acting as a protein-conducting channel at the inner envelope. The chain is Protein TIC 214 from Nasturtium officinale (Watercress).